We begin with the raw amino-acid sequence, 147 residues long: Large ribosomal subunit protein uL11 (147 aa).

The protein belongs to the universal ribosomal protein uL11 family. Part of the ribosomal stalk of the 50S ribosomal subunit. Interacts with L10 and the large rRNA to form the base of the stalk. L10 forms an elongated spine to which L12 dimers bind in a sequential fashion forming a multimeric L10(L12)X complex. In terms of processing, one or more lysine residues are methylated.

Functionally, forms part of the ribosomal stalk which helps the ribosome interact with GTP-bound translation factors. This is Large ribosomal subunit protein uL11 from Sorangium cellulosum (strain So ce56) (Polyangium cellulosum (strain So ce56)).